Reading from the N-terminus, the 159-residue chain is Ubiquitin-like protein ATG12 (159 aa).

Residues 1–40 are disordered; the sequence is MASPQPPFGGGSNSNSNTASPSNNLSPTASPLLEGRDSPN. The span at 13-27 shows a compositional bias: low complexity; it reads NSNSNTASPSNNLSP. Gly-159 is covalently cross-linked (Glycyl lysine isopeptide (Gly-Lys) (interchain with K-218 in ATG5)).

Belongs to the ATG12 family. Forms a conjugate with ATG5. Forms a thioester bond with the 'Cys-116' of ATG10. Interacts with the ATG7 C-terminal 40 amino acids domain. The ATG12-ATG5 conjugate forms a complex with several units of ATG16. The ATG12-ATG5 conjugate also associates with ATG3.

It is found in the preautophagosomal structure membrane. Its subcellular location is the cytoplasm. Ubiquitin-like protein involved in cytoplasm to vacuole transport (Cvt), autophagy vesicles formation, mitophagy, and nucleophagy. Conjugation with ATG5 through a ubiquitin-like conjugating system involving also ATG7 as an E1-like activating enzyme and ATG10 as an E2-like conjugating enzyme, is essential for its function. The ATG12-ATG5 conjugate acts as an E3-like enzyme which is required for lipidation of ATG8 and ATG8 association to the vesicle membranes. ATG12-ATG5 rearranges the ATG3 catalytic center and enhances its E2 activity. Plays a role in sexual development and perithecia formation. The protein is Ubiquitin-like protein ATG12 of Sordaria macrospora (strain ATCC MYA-333 / DSM 997 / K(L3346) / K-hell).